Here is a 224-residue protein sequence, read N- to C-terminus: Urease accessory protein UreF (224 aa).

This sequence belongs to the UreF family. UreD, UreF and UreG form a complex that acts as a GTP-hydrolysis-dependent molecular chaperone, activating the urease apoprotein by helping to assemble the nickel containing metallocenter of UreC. The UreE protein probably delivers the nickel.

It localises to the cytoplasm. In terms of biological role, required for maturation of urease via the functional incorporation of the urease nickel metallocenter. The protein is Urease accessory protein UreF of Nitrosococcus oceani (strain ATCC 19707 / BCRC 17464 / JCM 30415 / NCIMB 11848 / C-107).